We begin with the raw amino-acid sequence, 442 residues long: Divalent metal cation transporter MntH (442 aa).

11 consecutive transmembrane segments (helical) span residues 29–49 (MLAY…PGNW), 62–82 (TLLT…SLCV), 106–126 (FCLW…ELLG), 135–155 (FVIP…VLLF), 166–186 (ALVI…ILFS), 209–229 (MLYI…LYLH), 258–278 (FALS…AATF), 295–315 (LLSP…ALLA), 347–367 (LITR…FGEN), 372–392 (LIVL…IPLV), and 413–433 (LAWL…LQSL).

Belongs to the NRAMP family.

Its subcellular location is the cell inner membrane. In terms of biological role, h(+)-stimulated, divalent metal cation uptake system. This chain is Divalent metal cation transporter MntH, found in Nostoc sp. (strain PCC 7120 / SAG 25.82 / UTEX 2576).